Here is a 576-residue protein sequence, read N- to C-terminus: 9-cis-epoxycarotenoid dioxygenase NCED2, chloroplastic (576 aa).

Residues 1–34 (MEVPIAAMTFAHPANVMTLASRQPKSKRSHISPA) constitute a chloroplast transit peptide. 4 residues coordinate Fe cation: His270, His319, His385, and His563.

Belongs to the carotenoid oxygenase family. Requires Fe(2+) as cofactor.

Its subcellular location is the plastid. The protein localises to the chloroplast. The enzyme catalyses a 9-cis-epoxycarotenoid + O2 = a 12'-apo-carotenal + 2-cis,4-trans-xanthoxin. The catalysed reaction is 9-cis-violaxanthin + O2 = (3S,5R,6S)-5,6-epoxy-3-hydroxy-5,6-dihydro-12'-apo-beta-caroten-12'-al + 2-cis,4-trans-xanthoxin. It carries out the reaction 9'-cis-neoxanthin + O2 = (3S,5R,6R)-3,5-dihydroxy-6,7-didehydro-5,6-dihydro-12'-apo-beta-caroten-12'-al + 2-cis,4-trans-xanthoxin. Its function is as follows. Has a 11,12(11',12') 9-cis epoxycarotenoid cleavage activity. Catalyzes the first step of abscisic-acid biosynthesis from carotenoids. The chain is 9-cis-epoxycarotenoid dioxygenase NCED2, chloroplastic from Oryza sativa subsp. japonica (Rice).